The following is a 299-amino-acid chain: Acetylglutamate kinase (299 aa).

Residues glycine 72 to glycine 73, arginine 94, and asparagine 196 contribute to the substrate site.

Belongs to the acetylglutamate kinase family. ArgB subfamily.

The protein localises to the cytoplasm. The catalysed reaction is N-acetyl-L-glutamate + ATP = N-acetyl-L-glutamyl 5-phosphate + ADP. The protein operates within amino-acid biosynthesis; L-arginine biosynthesis; N(2)-acetyl-L-ornithine from L-glutamate: step 2/4. Its function is as follows. Catalyzes the ATP-dependent phosphorylation of N-acetyl-L-glutamate. The polypeptide is Acetylglutamate kinase (Burkholderia cenocepacia (strain HI2424)).